The primary structure comprises 264 residues: Thymidylate synthase (264 aa).

R21 lines the dUMP pocket. H51 lines the (6R)-5,10-methylene-5,6,7,8-tetrahydrofolate pocket. 126–127 contacts dUMP; that stretch reads RR. C146 (nucleophile) is an active-site residue. DUMP-binding positions include 166-169, N177, and 207-209; these read RSAD and HLY. Residue D169 coordinates (6R)-5,10-methylene-5,6,7,8-tetrahydrofolate. Position 263 (A263) interacts with (6R)-5,10-methylene-5,6,7,8-tetrahydrofolate.

It belongs to the thymidylate synthase family. Bacterial-type ThyA subfamily. Homodimer.

Its subcellular location is the cytoplasm. It catalyses the reaction dUMP + (6R)-5,10-methylene-5,6,7,8-tetrahydrofolate = 7,8-dihydrofolate + dTMP. It participates in pyrimidine metabolism; dTTP biosynthesis. Catalyzes the reductive methylation of 2'-deoxyuridine-5'-monophosphate (dUMP) to 2'-deoxythymidine-5'-monophosphate (dTMP) while utilizing 5,10-methylenetetrahydrofolate (mTHF) as the methyl donor and reductant in the reaction, yielding dihydrofolate (DHF) as a by-product. This enzymatic reaction provides an intracellular de novo source of dTMP, an essential precursor for DNA biosynthesis. The sequence is that of Thymidylate synthase from Legionella pneumophila subsp. pneumophila (strain Philadelphia 1 / ATCC 33152 / DSM 7513).